Consider the following 92-residue polypeptide: C-C motif chemokine 4 (92 aa).

The signal sequence occupies residues 1 to 23 (MKLCVTVLSLLVLVAAFCSPALS). Intrachain disulfides connect Cys-34–Cys-58 and Cys-35–Cys-74.

It belongs to the intercrine beta (chemokine CC) family. Homodimer. Interacts with CCR5.

The protein localises to the secreted. Its function is as follows. Monokine with inflammatory and chemokinetic properties. The polypeptide is C-C motif chemokine 4 (CCL4) (Canis lupus familiaris (Dog)).